We begin with the raw amino-acid sequence, 761 residues long: Cyclin-F (761 aa).

Positions 19–27 match the Nuclear localization signal 1 motif; that stretch reads RRRIKRRPR. The 48-residue stretch at 28–75 folds into the F-box domain; it reads VLTLLSLPEDVLLYVLECLPAVDILSMREVHPHLRSLVDSHSSVWARA. In terms of domain architecture, Cyclin N-terminal spans 300 to 411; it reads NKSSIFTTQK…EIISALEGKI (112 aa). Short sequence motifs (d box) lie at residues 316–319 and 355–358; these read RYIL and RAKL. 2 disordered regions span residues 575-594 and 677-761; these read NKTK…SFVT and AENG…SDEL. The segment covering 580 to 590 has biased composition (basic and acidic residues); it reads RREESIQEDRG. The interval 589 to 745 is PEST; the sequence is RGSFVTTPTA…LLKASRRQVK (157 aa). Low complexity predominate over residues 691–718; it reads SSGYSSVSSGGSPTSSSSPGLPFTPTPG. Residues 739–749 are compositionally biased toward basic residues; it reads ASRRQVKRKNQ.

Belongs to the cyclin family. Cyclin AB subfamily. In terms of assembly, component of the SCF(CCNF) complex.

Its subcellular location is the nucleus. It localises to the cytoplasm. The protein resides in the perinuclear region. The protein localises to the cytoskeleton. It is found in the microtubule organizing center. Its subcellular location is the centrosome. It localises to the centriole. Functionally, substrate recognition component of the SCF(CCNF) E3 ubiquitin-protein ligase complex which mediates the ubiquitination and subsequent proteasomal degradation of target proteins. The SCF(CCNF) E3 ubiquitin-protein ligase complex is an integral component of the ubiquitin proteasome system (UPS) and links proteasome degradation to the cell cycle. Mediates the substrate recognition and the proteasomal degradation of various target proteins during G2 phase involved in the regulation of cell cycle progression and in the maintenance of genome stability. The polypeptide is Cyclin-F (ccnf) (Xenopus laevis (African clawed frog)).